We begin with the raw amino-acid sequence, 481 residues long: Aspartyl/glutamyl-tRNA(Asn/Gln) amidotransferase subunit B (481 aa).

Belongs to the GatB/GatE family. GatB subfamily. In terms of assembly, heterotrimer of A, B and C subunits.

It carries out the reaction L-glutamyl-tRNA(Gln) + L-glutamine + ATP + H2O = L-glutaminyl-tRNA(Gln) + L-glutamate + ADP + phosphate + H(+). The catalysed reaction is L-aspartyl-tRNA(Asn) + L-glutamine + ATP + H2O = L-asparaginyl-tRNA(Asn) + L-glutamate + ADP + phosphate + 2 H(+). Its function is as follows. Allows the formation of correctly charged Asn-tRNA(Asn) or Gln-tRNA(Gln) through the transamidation of misacylated Asp-tRNA(Asn) or Glu-tRNA(Gln) in organisms which lack either or both of asparaginyl-tRNA or glutaminyl-tRNA synthetases. The reaction takes place in the presence of glutamine and ATP through an activated phospho-Asp-tRNA(Asn) or phospho-Glu-tRNA(Gln). This Pseudomonas paraeruginosa (strain DSM 24068 / PA7) (Pseudomonas aeruginosa (strain PA7)) protein is Aspartyl/glutamyl-tRNA(Asn/Gln) amidotransferase subunit B.